The primary structure comprises 154 residues: Myoglobin (154 aa).

In terms of domain architecture, Globin spans 2–148 (GLSDGEWQLV…FRNDIAAKYK (147 aa)). Ser4 is modified (phosphoserine). His65 is a nitrite binding site. O2 is bound at residue His65. Residue Thr68 is modified to Phosphothreonine. His94 is a binding site for heme b.

The protein belongs to the globin family. In terms of assembly, monomeric.

The protein localises to the cytoplasm. Its subcellular location is the sarcoplasm. The enzyme catalyses Fe(III)-heme b-[protein] + nitric oxide + H2O = Fe(II)-heme b-[protein] + nitrite + 2 H(+). The catalysed reaction is H2O2 + AH2 = A + 2 H2O. Its function is as follows. Monomeric heme protein which primary function is to store oxygen and facilitate its diffusion within muscle tissues. Reversibly binds oxygen through a pentacoordinated heme iron and enables its timely and efficient release as needed during periods of heightened demand. Depending on the oxidative conditions of tissues and cells, and in addition to its ability to bind oxygen, it also has a nitrite reductase activity whereby it regulates the production of bioactive nitric oxide. Under stress conditions, like hypoxia and anoxia, it also protects cells against reactive oxygen species thanks to its pseudoperoxidase activity. The sequence is that of Myoglobin (MB) from Spalax ehrenbergi (Middle East blind mole rat).